Consider the following 152-residue polypeptide: Large ribosomal subunit protein uL15 (152 aa).

Positions 1–13 are enriched in polar residues; sequence MLTLGNLSPQEGS. Residues 1 to 62 are disordered; sequence MLTLGNLSPQ…GGQMPLQRRL (62 aa). The span at 31-40 shows a compositional bias: basic residues; it reads TAGRGHKGFK.

Belongs to the universal ribosomal protein uL15 family. Part of the 50S ribosomal subunit.

In terms of biological role, binds to the 23S rRNA. In Desulfotalea psychrophila (strain LSv54 / DSM 12343), this protein is Large ribosomal subunit protein uL15.